Here is a 183-residue protein sequence, read N- to C-terminus: Probable RNA 2'-phosphotransferase (183 aa).

The protein belongs to the KptA/TPT1 family.

Its function is as follows. Removes the 2'-phosphate from RNA via an intermediate in which the phosphate is ADP-ribosylated by NAD followed by a presumed transesterification to release the RNA and generate ADP-ribose 1''-2''-cyclic phosphate (APPR&gt;P). May function as an ADP-ribosylase. This Pyrococcus furiosus (strain ATCC 43587 / DSM 3638 / JCM 8422 / Vc1) protein is Probable RNA 2'-phosphotransferase.